A 115-amino-acid chain; its full sequence is Ribonuclease P protein component (115 aa).

Belongs to the RnpA family. In terms of assembly, consists of a catalytic RNA component (M1 or rnpB) and a protein subunit.

It carries out the reaction Endonucleolytic cleavage of RNA, removing 5'-extranucleotides from tRNA precursor.. RNaseP catalyzes the removal of the 5'-leader sequence from pre-tRNA to produce the mature 5'-terminus. It can also cleave other RNA substrates such as 4.5S RNA. The protein component plays an auxiliary but essential role in vivo by binding to the 5'-leader sequence and broadening the substrate specificity of the ribozyme. The protein is Ribonuclease P protein component of Symbiobacterium thermophilum (strain DSM 24528 / JCM 14929 / IAM 14863 / T).